Reading from the N-terminus, the 252-residue chain is Large ribosomal subunit protein uL4 (252 aa).

This sequence belongs to the universal ribosomal protein uL4 family. Part of the 50S ribosomal subunit.

One of the primary rRNA binding proteins, this protein initially binds near the 5'-end of the 23S rRNA. It is important during the early stages of 50S assembly. It makes multiple contacts with different domains of the 23S rRNA in the assembled 50S subunit and ribosome. In terms of biological role, forms part of the polypeptide exit tunnel. The protein is Large ribosomal subunit protein uL4 of Methanococcus maripaludis (strain C7 / ATCC BAA-1331).